A 373-amino-acid chain; its full sequence is Glutamate 5-kinase (373 aa).

Lysine 16 is an ATP binding site. Residues serine 56, aspartate 143, and asparagine 155 each contribute to the substrate site. Residue 175-176 participates in ATP binding; the sequence is TD. The region spanning 281 to 359 is the PUA domain; the sequence is RGVVTLDDGA…TKIETLLGYK (79 aa).

Belongs to the glutamate 5-kinase family.

It localises to the cytoplasm. It carries out the reaction L-glutamate + ATP = L-glutamyl 5-phosphate + ADP. It functions in the pathway amino-acid biosynthesis; L-proline biosynthesis; L-glutamate 5-semialdehyde from L-glutamate: step 1/2. Functionally, catalyzes the transfer of a phosphate group to glutamate to form L-glutamate 5-phosphate. This chain is Glutamate 5-kinase, found in Teredinibacter turnerae (strain ATCC 39867 / T7901).